The primary structure comprises 250 residues: Ribonuclease HII (250 aa).

Residues 66-250 (QLVAGVDEVG…SFAPVSEYEK (185 aa)) form the RNase H type-2 domain. Residues Asp72, Glu73, and Asp164 each contribute to the a divalent metal cation site.

It belongs to the RNase HII family. Requires Mn(2+) as cofactor. Mg(2+) serves as cofactor.

The protein localises to the cytoplasm. It catalyses the reaction Endonucleolytic cleavage to 5'-phosphomonoester.. Functionally, endonuclease that specifically degrades the RNA of RNA-DNA hybrids. This chain is Ribonuclease HII, found in Lactobacillus johnsonii (strain CNCM I-12250 / La1 / NCC 533).